Consider the following 153-residue polypeptide: Pheromone-binding protein Gp-9 (153 aa).

The signal sequence occupies residues 1 to 19 (MKTFVLHIFIFALVAFASA). 3 disulfide bridges follow: Cys-37/Cys-77, Cys-73/Cys-129, and Cys-118/Cys-138.

This sequence belongs to the PBP/GOBP family. As to quaternary structure, homodimer.

Its subcellular location is the secreted. Colony queen number, a major feature of social organization, is associated with worker genotype for Gp-9. Colonies are headed by either a single reproductive queen (monogyne form) or multiple queens (polygyne form). Differences in worker Gp-9 genotypes between social forms may cause differences in workers' abilities to recognize queens and regulate their numbers. The sequence is that of Pheromone-binding protein Gp-9 from Solenopsis substituta (Fire ant).